A 339-amino-acid polypeptide reads, in one-letter code: DNA-directed RNA polymerase subunit alpha (339 aa).

The segment at 1–234 (MIEKNWQELI…DQFQIFINFE (234 aa)) is alpha N-terminal domain (alpha-NTD). The tract at residues 251–339 (FNPALLRKVD…DLAKRFEDHV (89 aa)) is alpha C-terminal domain (alpha-CTD).

It belongs to the RNA polymerase alpha chain family. As to quaternary structure, homodimer. The RNAP catalytic core consists of 2 alpha, 1 beta, 1 beta' and 1 omega subunit. When a sigma factor is associated with the core the holoenzyme is formed, which can initiate transcription.

It carries out the reaction RNA(n) + a ribonucleoside 5'-triphosphate = RNA(n+1) + diphosphate. In terms of biological role, DNA-dependent RNA polymerase catalyzes the transcription of DNA into RNA using the four ribonucleoside triphosphates as substrates. This is DNA-directed RNA polymerase subunit alpha from Maricaulis maris (strain MCS10) (Caulobacter maris).